We begin with the raw amino-acid sequence, 549 residues long: Probable protein kinase UbiB (549 aa).

A Protein kinase domain is found at 123–501; it reads DFDETPLASA…QQQAHKSNYL (379 aa). ATP contacts are provided by residues 129–137 and Lys152; that span reads LASASISQV. Catalysis depends on Asp287, which acts as the Proton acceptor. 2 helical membrane-spanning segments follow: residues 498–518 and 520–540; these read SNYL…LFNQ and ATLW…IIGW.

This sequence belongs to the ABC1 family. UbiB subfamily.

The protein localises to the cell inner membrane. It participates in cofactor biosynthesis; ubiquinone biosynthesis [regulation]. Is probably a protein kinase regulator of UbiI activity which is involved in aerobic coenzyme Q (ubiquinone) biosynthesis. This Shewanella sp. (strain ANA-3) protein is Probable protein kinase UbiB.